Reading from the N-terminus, the 65-residue chain is MANVQKIGKAVYKGPSVVKEIIYGITLGFAVGGLWKMHHWNNQRRTKEFYDLLEKGEISVVVEDE.

The helical transmembrane segment at 20–37 (EIIYGITLGFAVGGLWKM) threads the bilayer.

Belongs to the cytochrome c oxidase subunit 5C family.

The protein localises to the mitochondrion inner membrane. In terms of biological role, this protein is one of the nuclear-coded polypeptide chains of cytochrome c oxidase, the terminal oxidase in mitochondrial electron transport. The polypeptide is Putative cytochrome c oxidase subunit 5C-4 (Arabidopsis thaliana (Mouse-ear cress)).